The primary structure comprises 503 residues: Maturase K (503 aa).

It belongs to the intron maturase 2 family. MatK subfamily.

Its subcellular location is the plastid. The protein resides in the chloroplast. Its function is as follows. Usually encoded in the trnK tRNA gene intron. Probably assists in splicing its own and other chloroplast group II introns. This chain is Maturase K, found in Caragana arborescens (Siberian pea tree).